The sequence spans 257 residues: MSTAANSIAFVSSDTADAKAALESLSARYGQCSVAEAVVVVALGGDGFLLQTLRDTMGTGKKVYGMNRGTIGFLMNEYRSGGLTERIAAAVAETIRPLEMLAVTSEGETVSALAINEVALWRQSYQTAKIRISVDDQIRLEELSCDGVMIATPAGSTAYNLSAHGPILPLDAPLLALTPVSPFRPRRWRGALLSNKATVRFDILEPEKRPVNAAADHTEVKAVTSVTVRESPTATATLLFDPNHSWNERILAEQFRY.

Aspartate 46 serves as the catalytic Proton acceptor. NAD(+) contacts are provided by residues 46–47 (DG), 116–117 (NE), aspartate 146, alanine 154, and 157–162 (TAYNLS).

The protein belongs to the NAD kinase family. It depends on a divalent metal cation as a cofactor.

It localises to the cytoplasm. It carries out the reaction NAD(+) + ATP = ADP + NADP(+) + H(+). In terms of biological role, involved in the regulation of the intracellular balance of NAD and NADP, and is a key enzyme in the biosynthesis of NADP. Catalyzes specifically the phosphorylation on 2'-hydroxyl of the adenosine moiety of NAD to yield NADP. The protein is NAD kinase of Mesorhizobium japonicum (strain LMG 29417 / CECT 9101 / MAFF 303099) (Mesorhizobium loti (strain MAFF 303099)).